Here is a 100-residue protein sequence, read N- to C-terminus: Small ribosomal subunit protein uS17 (100 aa).

The protein belongs to the universal ribosomal protein uS17 family. As to quaternary structure, part of the 30S ribosomal subunit.

One of the primary rRNA binding proteins, it binds specifically to the 5'-end of 16S ribosomal RNA. The chain is Small ribosomal subunit protein uS17 from Erythrobacter litoralis (strain HTCC2594).